The primary structure comprises 153 residues: Probable disulfide formation protein (153 aa).

A helical transmembrane segment spans residues 4–23 (DTRLYLAWLVALAATLGSLY). A disulfide bridge connects residues Cys-33 and Cys-36. The next 2 helical transmembrane spans lie at 38–57 (AQRIFMYPLAVILGIAAFVG) and 64–81 (YVLPLAALGLGFAIFQNL). The cysteines at positions 93 and 101 are disulfide-linked. A helical transmembrane segment spans residues 117–139 (RALTIPVLSMIAFALILALLSWP).

The protein belongs to the DsbB family. BdbC subfamily.

It localises to the cell membrane. Required for disulfide bond formation in some proteins. The sequence is that of Probable disulfide formation protein from Deinococcus radiodurans (strain ATCC 13939 / DSM 20539 / JCM 16871 / CCUG 27074 / LMG 4051 / NBRC 15346 / NCIMB 9279 / VKM B-1422 / R1).